Consider the following 636-residue polypeptide: LDL receptor repeat-containing protein egg-1 (636 aa).

Topologically, residues 1-130 (MSSIAQKNRN…NHSNLFQCPS (130 aa)) are cytoplasmic. Residues 131-151 (VAIVLVLALVILGVLAAIPLT) form a helical; Signal-anchor for type II membrane protein membrane-spanning segment. The Extracellular segment spans residues 152 to 636 (LMLTSSAQKM…VLKNSGRFPY (485 aa)). N-linked (GlcNAc...) asparagine glycosylation occurs at asparagine 202. LDL-receptor class A domains lie at 205 to 243 (TCSGFGFACTGAVHMVIPSSKRCDGFKDCQDGSDEENCK), 244 to 296 (ECQS…AMCK), 298 to 335 (TCSKDQFKCNGSNACLPLSAKCDGVKDCSDGSDENNCN), 336 to 375 (KCQKGAHVSLVSRNIKHLFASHVCDGVAQCADRSDEQQCD), 378 to 415 (TCSGSDKALCDDGTCIKRSQVCDGKKDCSDGMDEENCP), 457 to 499 (KCHP…KNCT), 503 to 541 (ECGIDNASQFTCDRKCVDASRRCDGVWDCEDKSDEQNCS), and 542 to 579 (QCASGSIKCSADKKCLPAYTRCNGVAECSDGSDELKCS). 22 disulfide bridges follow: cysteine 213–cysteine 233, cysteine 227–cysteine 242, cysteine 245–cysteine 273, cysteine 251–cysteine 286, cysteine 280–cysteine 295, cysteine 299–cysteine 312, cysteine 306–cysteine 325, cysteine 319–cysteine 334, cysteine 337–cysteine 365, cysteine 359–cysteine 374, cysteine 379–cysteine 392, cysteine 387–cysteine 405, cysteine 399–cysteine 414, cysteine 458–cysteine 476, cysteine 466–cysteine 489, cysteine 483–cysteine 498, cysteine 504–cysteine 518, cysteine 514–cysteine 531, cysteine 525–cysteine 540, cysteine 543–cysteine 556, cysteine 550–cysteine 569, and cysteine 563–cysteine 578. Residue asparagine 508 is glycosylated (N-linked (GlcNAc...) asparagine). Residue asparagine 614 is glycosylated (N-linked (GlcNAc...) asparagine).

The protein localises to the cell membrane. Functionally, probable receptor which is required for the oocyte-to-zygote transition although its exact function is controversial. Seems to be required for fertilization probably by promoting the interaction or fusion between sperm and oocyte. Conversely, shown to be dispensable for fertilization but required for the formation of a continuous and cohesive eggshell chitin layer by maintaining a homogenous distribution of chitin synthase chs-1 at the unfertilized oocyte cell membrane. Appears to recruit or maintain together to the unfertilized oocyte cortex several proteins including chs-1, kinase mbk-2 and pseudophosphatases egg-3, and possibly egg-4 and egg-5. In Caenorhabditis briggsae, this protein is LDL receptor repeat-containing protein egg-1.